The chain runs to 522 residues: Zinc finger protein STOP1 homolog (522 aa).

2 stretches are compositionally biased toward polar residues: residues 1–12 and 19–40; these read MDSGLGRSSETS and MASNATRNTDPDQQGVRFSSMD. Disordered stretches follow at residues 1 to 43 and 234 to 260; these read MDSG…DQPP and CGGEGSEPIPMEDHDVKESDDGGEREN. Positions 244–260 are enriched in basic and acidic residues; sequence MEDHDVKESDDGGEREN. The segment at 282–304 adopts a C2H2-type 1 zinc-finger fold; that stretch reads HFCLICGKGFKRDANLRMHMRGH. A C2H2-type 2; atypical zinc finger spans residues 390–421; it reads KHCGRDKWLCSCGTTFSRKDKLFGHVALFQGH.

Its subcellular location is the nucleus. In terms of biological role, probable transcription factor that may be involved in aluminum tolerance. The protein is Zinc finger protein STOP1 homolog of Oryza sativa subsp. japonica (Rice).